The chain runs to 408 residues: Collagen and calcium-binding EGF domain-containing protein 1 (408 aa).

The N-terminal stretch at 1-35 (MVPPPLPSRGGAAKRQLGKSLGPLLLLLALGHTWT) is a signal peptide. Positions 135–176 (DIDECATSNTTLCAHICINTMGSYHCECREGYILEDDGRTCT) constitute an EGF-like; calcium-binding domain. Intrachain disulfides connect Cys139–Cys151, Cys147–Cys160, and Cys162–Cys175. N-linked (GlcNAc...) asparagine glycosylation is present at Asn143. A glycan (N-linked (GlcNAc...) asparagine) is linked at Asn183. Disordered stretches follow at residues 246-335 (YLPG…GPPG) and 361-408 (HRTH…NFYP). 2 Collagen-like domains span residues 247 to 292 (LPGP…PMGP) and 302 to 335 (GRRGPVGPPGAPGRHGSKGERGAPGPPGSPGPPG). The span at 272–281 (PGMPGPPGQP) shows a compositional bias: pro residues. The segment covering 283-294 (PRGSMGPMGPSP) has biased composition (low complexity). Residues 325-334 (PGPPGSPGPP) are compositionally biased toward pro residues. Ser387 is a glycosylation site (O-linked (Xyl...) (chondroitin sulfate) serine). Residues 390–402 (DYSRRTEARDPEA) are compositionally biased toward basic and acidic residues.

It belongs to the CCBE1 family.

It localises to the secreted. Its function is as follows. Required for lymphangioblast budding and angiogenic sprouting from venous endothelium during embryogenesis. The polypeptide is Collagen and calcium-binding EGF domain-containing protein 1 (Ccbe1) (Mus musculus (Mouse)).